The chain runs to 166 residues: MTESTSRRPAYARLLDRAVRILAVRDHSEQELRRKLVAPIMGKNGPEEIDATAEDYERVIAWCHEHGYLDDSRFVARFIASRSRKGYGPARIRQELNQKGISREATEKAMRECDIDWCALARDHATRKYDEPLPTVFSEKVKIQRFLLYRGYLMEDIQDIWRNFAD.

It belongs to the RecX family.

It is found in the cytoplasm. In terms of biological role, modulates RecA activity. The protein is Regulatory protein RecX of Shigella dysenteriae serotype 1 (strain Sd197).